We begin with the raw amino-acid sequence, 327 residues long: Taste receptor type 2 member 102 (327 aa).

The Extracellular segment spans residues 1–7; it reads MEPVIYS. The helical transmembrane segment at 8 to 28 threads the bilayer; that stretch reads FATLLIHVEFIFGNLSNGFIV. The Cytoplasmic segment spans residues 29-46; the sequence is LSNFWDWVIKRKLSTIDK. The helical transmembrane segment at 47–67 threads the bilayer; sequence ILLTLAISRITLIWEIYTWFT. The Extracellular segment spans residues 68–87; the sequence is SVYGPSSFAIGMKLQILYFT. The chain crosses the membrane as a helical span at residues 88 to 108; the sequence is WILSSHFSLWFATALSIFYLL. Over 109-124 the chain is Cytoplasmic; the sequence is RIANCSWKIFLYLKWR. Residues 125 to 145 traverse the membrane as a helical segment; that stretch reads LKQVIVGMLLASLVFLPGILT. The Extracellular segment spans residues 146–179; it reads QRTLEERPYRYGGNTSEDSMETDFARFTELILFN. N-linked (GlcNAc...) asparagine glycans are attached at residues N159 and N179. Residues 180–200 form a helical membrane-spanning segment; that stretch reads LTIFSVIPFSLASISFLLLIF. At 201 to 229 the chain is on the cytoplasmic side; that stretch reads SLWKHLRKMQLSSRGHGDPSTKAHTNALR. A helical membrane pass occupies residues 230–250; it reads IMVSFLLLYSIYFLSLLLSWI. At 251–260 the chain is on the extracellular side; it reads AQKHHSKLVD. A helical membrane pass occupies residues 261-281; the sequence is IIGIITGLMYPSAHSFILILG. Residues 282-327 are Cytoplasmic-facing; that stretch reads NSKLMQTSLWILSHLRCRLKGENILNPSGNQVTSCYIFCIANKSVS.

Belongs to the G-protein coupled receptor T2R family.

It localises to the membrane. In terms of biological role, putative taste receptor which may play a role in the perception of bitterness. This is Taste receptor type 2 member 102 from Rattus norvegicus (Rat).